Here is a 661-residue protein sequence, read N- to C-terminus: UvrABC system protein B (661 aa).

The Helicase ATP-binding domain occupies 25 to 182; the sequence is KGLNNKKRSQ…NDLVNLQYER (158 aa). Residue 38–45 participates in ATP binding; that stretch reads GITGSGKT. Positions 91-114 match the Beta-hairpin motif; the sequence is YYDYYQPEAYIPKTDVFIEKDSSI. Positions 430–592 constitute a Helicase C-terminal domain; it reads QVEDLVGEIQ…IIPKTINRTI (163 aa). Residues 621 to 656 form the UVR domain; the sequence is KAHIDKLRKEMLKAASNLEFEQAAKLRDQLKTLEEA.

Belongs to the UvrB family. Forms a heterotetramer with UvrA during the search for lesions. Interacts with UvrC in an incision complex.

The protein localises to the cytoplasm. Functionally, the UvrABC repair system catalyzes the recognition and processing of DNA lesions. A damage recognition complex composed of 2 UvrA and 2 UvrB subunits scans DNA for abnormalities. Upon binding of the UvrA(2)B(2) complex to a putative damaged site, the DNA wraps around one UvrB monomer. DNA wrap is dependent on ATP binding by UvrB and probably causes local melting of the DNA helix, facilitating insertion of UvrB beta-hairpin between the DNA strands. Then UvrB probes one DNA strand for the presence of a lesion. If a lesion is found the UvrA subunits dissociate and the UvrB-DNA preincision complex is formed. This complex is subsequently bound by UvrC and the second UvrB is released. If no lesion is found, the DNA wraps around the other UvrB subunit that will check the other stand for damage. This chain is UvrABC system protein B, found in Rickettsia bellii (strain OSU 85-389).